A 69-amino-acid chain; its full sequence is U2-agatoxin-Ao1c (69 aa).

The N-terminal stretch at 1-20 (MKAIISLLLISAMVFSMIEA) is a signal peptide. Residues 21 to 34 (VPVEEGLQLFEGER) constitute a propeptide that is removed on maturation. Disulfide bonds link cysteine 36-cysteine 52, cysteine 43-cysteine 57, and cysteine 51-cysteine 67. Leucine 68 carries the leucine amide modification.

Belongs to the neurotoxin 01 (U2-agtx) family. As to expression, expressed by the venom gland.

It localises to the secreted. Insect active toxin causing rapid but reversible paralysis in crickets. No activity shown in mammals. Does not show effect on mammalian voltage-gated calcium channels. This is U2-agatoxin-Ao1c from Agelena orientalis (Funnel-web spider).